A 636-amino-acid chain; its full sequence is Threonine--tRNA ligase (636 aa).

A TGS domain is found at Met-1–Thr-61. Residues Asp-243–Pro-534 form a catalytic region. The Zn(2+) site is built by Cys-334, His-385, and His-511.

It belongs to the class-II aminoacyl-tRNA synthetase family. As to quaternary structure, homodimer. Zn(2+) serves as cofactor.

Its subcellular location is the cytoplasm. The enzyme catalyses tRNA(Thr) + L-threonine + ATP = L-threonyl-tRNA(Thr) + AMP + diphosphate + H(+). Functionally, catalyzes the attachment of threonine to tRNA(Thr) in a two-step reaction: L-threonine is first activated by ATP to form Thr-AMP and then transferred to the acceptor end of tRNA(Thr). Also edits incorrectly charged L-seryl-tRNA(Thr). This Colwellia psychrerythraea (strain 34H / ATCC BAA-681) (Vibrio psychroerythus) protein is Threonine--tRNA ligase.